We begin with the raw amino-acid sequence, 156 residues long: RNA pyrophosphohydrolase (156 aa).

One can recognise a Nudix hydrolase domain in the interval 6–148; sequence NYRPNVAAIV…KKNIYVKVIK (143 aa). A Nudix box motif is present at residues 43 to 64; it reads GGIDKGESVKNALFRELKEEIG.

Belongs to the Nudix hydrolase family. RppH subfamily. A divalent metal cation serves as cofactor.

In terms of biological role, accelerates the degradation of transcripts by removing pyrophosphate from the 5'-end of triphosphorylated RNA, leading to a more labile monophosphorylated state that can stimulate subsequent ribonuclease cleavage. This chain is RNA pyrophosphohydrolase, found in Campylobacter jejuni subsp. jejuni serotype O:6 (strain 81116 / NCTC 11828).